The sequence spans 271 residues: Phosphonoacetaldehyde hydrolase (271 aa).

Catalysis depends on Asp-12, which acts as the Nucleophile. Mg(2+) contacts are provided by Asp-12 and Ala-14. Lys-54 (schiff-base intermediate with substrate) is an active-site residue. Residue Asp-188 participates in Mg(2+) binding.

The protein belongs to the HAD-like hydrolase superfamily. PhnX family. Homodimer. The cofactor is Mg(2+).

It catalyses the reaction phosphonoacetaldehyde + H2O = acetaldehyde + phosphate + H(+). In terms of biological role, involved in phosphonate degradation. The protein is Phosphonoacetaldehyde hydrolase of Vibrio parahaemolyticus serotype O3:K6 (strain RIMD 2210633).